A 69-amino-acid chain; its full sequence is MDWNRVEGNWKQVKGKVKEQWGKLTDDDLDQISGSREQLEGKIQERYGIEKDRVRRDIDDWYGRQTWNW.

This sequence belongs to the UPF0337 (CsbD) family.

The chain is UPF0337 protein RB0906 from Rhizobium meliloti (strain 1021) (Ensifer meliloti).